The primary structure comprises 150 residues: Large ribosomal subunit protein bL9 (150 aa).

The protein belongs to the bacterial ribosomal protein bL9 family.

Binds to the 23S rRNA. The protein is Large ribosomal subunit protein bL9 of Corynebacterium diphtheriae (strain ATCC 700971 / NCTC 13129 / Biotype gravis).